Reading from the N-terminus, the 968-residue chain is RNA polymerase-associated protein RapA (968 aa).

The 170-residue stretch at 163 to 332 (EVGQRFAPRV…FARLRLLDPD (170 aa)) folds into the Helicase ATP-binding domain. An ATP-binding site is contributed by 176–183 (DEVGLGKT). Positions 278–281 (DEAH) match the DEAH box motif. The region spanning 491–645 (RVDWLIDFLK…TCPTGHILFN (155 aa)) is the Helicase C-terminal domain.

It belongs to the SNF2/RAD54 helicase family. RapA subfamily. As to quaternary structure, interacts with the RNAP. Has a higher affinity for the core RNAP than for the holoenzyme. Its ATPase activity is stimulated by binding to RNAP.

In terms of biological role, transcription regulator that activates transcription by stimulating RNA polymerase (RNAP) recycling in case of stress conditions such as supercoiled DNA or high salt concentrations. Probably acts by releasing the RNAP, when it is trapped or immobilized on tightly supercoiled DNA. Does not activate transcription on linear DNA. Probably not involved in DNA repair. The protein is RNA polymerase-associated protein RapA of Shewanella loihica (strain ATCC BAA-1088 / PV-4).